The primary structure comprises 101 residues: Large ribosomal subunit protein uL24 (101 aa).

This sequence belongs to the universal ribosomal protein uL24 family. As to quaternary structure, part of the 50S ribosomal subunit.

In terms of biological role, one of two assembly initiator proteins, it binds directly to the 5'-end of the 23S rRNA, where it nucleates assembly of the 50S subunit. Its function is as follows. One of the proteins that surrounds the polypeptide exit tunnel on the outside of the subunit. The polypeptide is Large ribosomal subunit protein uL24 (Paracoccus denitrificans (strain Pd 1222)).